We begin with the raw amino-acid sequence, 94 residues long: Co-chaperonin GroES (94 aa).

The protein belongs to the GroES chaperonin family. As to quaternary structure, heptamer of 7 subunits arranged in a ring. Interacts with the chaperonin GroEL.

It is found in the cytoplasm. Functionally, together with the chaperonin GroEL, plays an essential role in assisting protein folding. The GroEL-GroES system forms a nano-cage that allows encapsulation of the non-native substrate proteins and provides a physical environment optimized to promote and accelerate protein folding. GroES binds to the apical surface of the GroEL ring, thereby capping the opening of the GroEL channel. The polypeptide is Co-chaperonin GroES (Staphylococcus carnosus (strain TM300)).